The following is a 228-amino-acid chain: DNA mismatch repair protein MutH (228 aa).

It belongs to the MutH family.

The protein resides in the cytoplasm. Functionally, sequence-specific endonuclease that cleaves unmethylated GATC sequences. It is involved in DNA mismatch repair. The chain is DNA mismatch repair protein MutH from Photorhabdus laumondii subsp. laumondii (strain DSM 15139 / CIP 105565 / TT01) (Photorhabdus luminescens subsp. laumondii).